The chain runs to 366 residues: tRNA/tmRNA (uracil-C(5))-methyltransferase (366 aa).

Gln190, Tyr218, Asn223, Glu239, and Asp299 together coordinate S-adenosyl-L-methionine. The active-site Nucleophile is Cys324. The Proton acceptor role is filled by Glu358.

The protein belongs to the class I-like SAM-binding methyltransferase superfamily. RNA M5U methyltransferase family. TrmA subfamily.

It catalyses the reaction uridine(54) in tRNA + S-adenosyl-L-methionine = 5-methyluridine(54) in tRNA + S-adenosyl-L-homocysteine + H(+). The catalysed reaction is uridine(341) in tmRNA + S-adenosyl-L-methionine = 5-methyluridine(341) in tmRNA + S-adenosyl-L-homocysteine + H(+). Functionally, dual-specificity methyltransferase that catalyzes the formation of 5-methyluridine at position 54 (m5U54) in all tRNAs, and that of position 341 (m5U341) in tmRNA (transfer-mRNA). This is tRNA/tmRNA (uracil-C(5))-methyltransferase from Cellvibrio japonicus (strain Ueda107) (Pseudomonas fluorescens subsp. cellulosa).